The following is a 427-amino-acid chain: Galactose-3-O-sulfotransferase 3 (427 aa).

At 1-19 (MPPIFQRLQQATKMSRRKI) the chain is on the cytoplasmic side. A helical; Signal-anchor for type II membrane protein membrane pass occupies residues 20-40 (LLLVLGCSTLSLLIHQGAQLS). Over 41 to 427 (WYPKLFPLSC…RPIRALRPGH (387 aa)) the chain is Lumenal. 4 N-linked (GlcNAc...) asparagine glycosylation sites follow: N90, N109, N176, and N301. Positions 404–427 (MRLRPEPVLDNPPPRPIRALRPGH) are disordered.

This sequence belongs to the galactose-3-O-sulfotransferase family. Requires Mg(2+) as cofactor.

Its subcellular location is the golgi apparatus. It is found in the golgi stack membrane. The protein operates within protein modification; carbohydrate sulfation. In terms of biological role, transfers a sulfate to position 3 of non-reducing beta-galactosyl residues in N-glycans and core2-branched O-glycans. Has high activity towards Gal-beta-1,4-GlcNAc, Gal-beta-1,4(Fuc-alpha-1,3)GlcNAc and lower activity towards Gal-beta-1,3(Fuc-alpha-1,4)GlcNAc. The chain is Galactose-3-O-sulfotransferase 3 (GAL3ST3) from Bos taurus (Bovine).